The chain runs to 156 residues: ATP synthase subunit b (156 aa).

A helical membrane pass occupies residues 7–26; that stretch reads ILGQAIAFVLFVWFCMKYVW.

It belongs to the ATPase B chain family. In terms of assembly, F-type ATPases have 2 components, F(1) - the catalytic core - and F(0) - the membrane proton channel. F(1) has five subunits: alpha(3), beta(3), gamma(1), delta(1), epsilon(1). F(0) has three main subunits: a(1), b(2) and c(10-14). The alpha and beta chains form an alternating ring which encloses part of the gamma chain. F(1) is attached to F(0) by a central stalk formed by the gamma and epsilon chains, while a peripheral stalk is formed by the delta and b chains.

It is found in the cell inner membrane. F(1)F(0) ATP synthase produces ATP from ADP in the presence of a proton or sodium gradient. F-type ATPases consist of two structural domains, F(1) containing the extramembraneous catalytic core and F(0) containing the membrane proton channel, linked together by a central stalk and a peripheral stalk. During catalysis, ATP synthesis in the catalytic domain of F(1) is coupled via a rotary mechanism of the central stalk subunits to proton translocation. Functionally, component of the F(0) channel, it forms part of the peripheral stalk, linking F(1) to F(0). This chain is ATP synthase subunit b, found in Pectobacterium atrosepticum (strain SCRI 1043 / ATCC BAA-672) (Erwinia carotovora subsp. atroseptica).